Reading from the N-terminus, the 675-residue chain is Protein PALS1 (675 aa).

2 disordered regions span residues 1-32 and 52-79; these read MTTSYMNGHVTEESDSGIKNLGLASPEEHPKH and RSAQLERIRQQQEDMRRRREEEGKKQEL. The tract at residues 1–345 is required for the correct localization of PALS1 and PATJ at cell-cell contacts and the normal formation of tight junctions and adherens junctions; that stretch reads MTTSYMNGHV…QQIKPPPAKE (345 aa). Phosphoserine occurs at positions 14 and 25. Positions 21–140 are interaction with PARD6B; the sequence is LGLASPEEHP…LKHIQHTLVD (120 aa). The span at 54-79 shows a compositional bias: basic and acidic residues; that stretch reads AQLERIRQQQEDMRRRREEEGKKQEL. Ser83 and Ser84 each carry phosphoserine. 2 L27 domains span residues 120–177 and 179–235; these read KILE…NKAS and PFPL…MQLE. The interaction with LIN7C stretch occupies residues 181–243; it reads PLIANVQDLV…LEPITDERVY (63 aa). Positions 256-336 constitute a PDZ domain; it reads IVRIEKARDI…TLTFVLIPSQ (81 aa). An SH3 domain is found at 345 to 417; the sequence is ETVIHVKAHF…PGKSFQQQRE (73 aa). Residues 479–660 enclose the Guanylate kinase-like domain; sequence KRPIILIGPQ…AYQELLRLIN (182 aa). Residue 486-493 participates in ATP binding; that stretch reads GPQNCGQN.

This sequence belongs to the MAGUK family. In terms of assembly, heterodimer with MPP1. Forms a heterotrimeric complex composed of PALS1, LIN7B and PATJ; the N-terminal L27 domain of PALS1 interacts with the L27 domain of PATJ and the C-terminal L27 domain of PALS1 interacts with the L27 domain of LIN7B. Component of a complex composed of PALS1, CRB1 and MPP4. Component of a complex whose core is composed of ARHGAP17, AMOT, PALS1, PATJ and PARD3/PAR3. Component of a complex composed of PALS1, CRB1 and EPB41L5. Within the complex, interacts (via HOOK domain) with EPB41L5 (via FERM domain), and interacts with CRB1 (via intracellular domain). Component of a complex composed of PALS1, MPP3 and CRB1; PALS1 acts as a bridging protein between MPP3 (via guanylate kinase-like domain) and CRB1. Component of a complex composed of CRB3, PALS1 and PATJ. As part of the Crumbs complex; interacts with WWP1, the interaction is enhanced by AMOTL2 and facilitates WWP1 localization to the plasma membrane. The Crumbs complex promotes monoubiquitination of AMOTL2 by WWP1, which activates the Hippo signaling pathway. Interacts (via PDZ domain) with PATJ (via N-terminus). Interacts with EZR. Interacts (via PDZ domain) with CRB1 (via C-terminal ERLI motif). While the PDZ domain is sufficient for interaction with CRB1, the adjacent SH3 and guanylate kinase-like domains are likely to contribute to a high affinity interaction. Interacts with WWTR1/TAZ (via WW domain). Interacts with MPP7. Interacts (via PDZ domain) with CRB3 (via C-terminus). Interacts with LIN7C. Interacts with MPDZ. Interacts with PARD6B. Interacts with SC6A1. Interacts with CDH5; the interaction promotes PALS1 localization to cell junctions and is required for CDH5-mediated vascular lumen formation and endothelial cell. Interacts with NPHP1 (via coiled coil and SH3 domains). Interacts with NPHP4. Interacts with CRB2.

Its subcellular location is the golgi apparatus. The protein localises to the cell membrane. It is found in the endomembrane system. It localises to the cell junction. The protein resides in the tight junction. Its subcellular location is the adherens junction. The protein localises to the cell projection. It is found in the axon. It localises to the perikaryon. The protein resides in the apical cell membrane. Functionally, plays a role in tight junction biogenesis and in the establishment of cell polarity in epithelial cells. Also involved in adherens junction biogenesis by ensuring correct localization of the exocyst complex protein EXOC4/SEC8 which allows trafficking of adherens junction structural component CDH1 to the cell surface. Plays a role through its interaction with CDH5 in vascular lumen formation and endothelial membrane polarity. Required during embryonic and postnatal retinal development. Required for the maintenance of cerebellar progenitor cells in an undifferentiated proliferative state, preventing premature differentiation, and is required for cerebellar histogenesis, fissure formation, cerebellar layer organization and cortical development. Plays a role in neuronal progenitor cell survival, potentially via promotion of mTOR signaling. Plays a role in the radial and longitudinal extension of the myelin sheath in Schwann cells. May modulate SC6A1/GAT1-mediated GABA uptake by stabilizing the transporter. May play a role in the T-cell receptor-mediated activation of NF-kappa-B. Required for localization of EZR to the apical membrane of parietal cells and may play a role in the dynamic remodeling of the apical cytoskeleton. Required for the normal polarized localization of the vesicular marker STX4. Required for the correct trafficking of the myelin proteins PMP22 and MAG. Involved in promoting phosphorylation and cytoplasmic retention of transcriptional coactivators YAP1 and WWTR1/TAZ which leads to suppression of TGFB1-dependent transcription of target genes such as CCN2/CTGF, SERPINE1/PAI1, SNAI1/SNAIL1 and SMAD7. The protein is Protein PALS1 of Rattus norvegicus (Rat).